Consider the following 63-residue polypeptide: Large ribosomal subunit protein eL24 (63 aa).

Zn(2+) is bound by residues Cys7, Cys10, Cys33, and Cys37. Residues 7-37 (CSFCGGSIEPGTGLMYVLRNGQILWFCSSKC) form a C4-type zinc finger.

Belongs to the eukaryotic ribosomal protein eL24 family. Part of the 50S ribosomal subunit. Forms a cluster with proteins L3 and L14. The cofactor is Zn(2+).

Functionally, binds to the 23S rRNA. The sequence is that of Large ribosomal subunit protein eL24 from Aeropyrum pernix (strain ATCC 700893 / DSM 11879 / JCM 9820 / NBRC 100138 / K1).